The chain runs to 191 residues: Lipoprotein signal peptidase (191 aa).

The next 3 membrane-spanning stretches (helical) occupy residues Val-26–Trp-46, Ala-84–Trp-104, and Phe-110–Leu-130. Active-site residues include Asp-137 and Asp-163. Residues Phe-156 to Ala-176 form a helical membrane-spanning segment.

Belongs to the peptidase A8 family.

The protein localises to the cell membrane. The catalysed reaction is Release of signal peptides from bacterial membrane prolipoproteins. Hydrolyzes -Xaa-Yaa-Zaa-|-(S,diacylglyceryl)Cys-, in which Xaa is hydrophobic (preferably Leu), and Yaa (Ala or Ser) and Zaa (Gly or Ala) have small, neutral side chains.. Its pathway is protein modification; lipoprotein biosynthesis (signal peptide cleavage). In terms of biological role, this protein specifically catalyzes the removal of signal peptides from prolipoproteins. In Deinococcus radiodurans (strain ATCC 13939 / DSM 20539 / JCM 16871 / CCUG 27074 / LMG 4051 / NBRC 15346 / NCIMB 9279 / VKM B-1422 / R1), this protein is Lipoprotein signal peptidase.